Consider the following 98-residue polypeptide: NADH-ubiquinone oxidoreductase chain 4L (98 aa).

3 helical membrane passes run 1–21, 28–48, and 59–79; these read MMSISLNLTMAFLLALAGVLI, STLLCLEGMMLSLFILMALLI, and APLILLVFSACEAGVGLALLV.

Belongs to the complex I subunit 4L family. In terms of assembly, core subunit of respiratory chain NADH dehydrogenase (Complex I) which is composed of 45 different subunits.

It localises to the mitochondrion inner membrane. It carries out the reaction a ubiquinone + NADH + 5 H(+)(in) = a ubiquinol + NAD(+) + 4 H(+)(out). In terms of biological role, core subunit of the mitochondrial membrane respiratory chain NADH dehydrogenase (Complex I) which catalyzes electron transfer from NADH through the respiratory chain, using ubiquinone as an electron acceptor. Part of the enzyme membrane arm which is embedded in the lipid bilayer and involved in proton translocation. The protein is NADH-ubiquinone oxidoreductase chain 4L (MT-ND4L) of Osphranter robustus (Wallaroo).